Reading from the N-terminus, the 489-residue chain is uncharacterized protein (489 aa).

Helical transmembrane passes span 29–49, 67–87, 90–110, 119–139, 152–172, 186–206, 276–296, 308–328, 351–371, 397–417, and 418–438; these read FIAS…TGLG, LLYA…KYLG, WALA…WYFD, IFTG…TAYI, FIAT…FIAF, AVYI…ILFI, LNNV…TLIL, IIGL…ELGW, GGAL…IVSV, AAGM…LGQG, and IIYF…TSIF.

It is found in the membrane. This is an uncharacterized protein from Schizosaccharomyces pombe (strain 972 / ATCC 24843) (Fission yeast).